The following is a 119-amino-acid chain: Host cell factor C1 regulator 1 (119 aa).

Residues 1 to 34 are disordered; that stretch reads MILQQPLERGPQGRAQRDPRAASGASGGLDAREP. Residues 57-60 form an interaction with HCFC1 region; that stretch reads DHPY. The Nuclear export signal signature appears at 91–100; the sequence is IPEALRLLRL.

As to quaternary structure, interacts with HCFC1.

It localises to the cytoplasm. The protein resides in the nucleus. Its function is as follows. Regulates HCFC1 activity by modulating its subcellular localization. Overexpression of HCFC1R1 leads to accumulation of HCFC1 in the cytoplasm. HCFC1R1-mediated export may provide the pool of cytoplasmic HCFC1 required for import of virion-derived VP16 into the nucleus. This chain is Host cell factor C1 regulator 1 (HCFC1R1), found in Bos taurus (Bovine).